Consider the following 172-residue polypeptide: Small ribosomal subunit protein uS5 (172 aa).

In terms of domain architecture, S5 DRBM spans 15-78 (LNDKLIFINR…ANAKRNLSRI (64 aa)).

The protein belongs to the universal ribosomal protein uS5 family. As to quaternary structure, part of the 30S ribosomal subunit. Contacts proteins S4 and S8.

Its function is as follows. With S4 and S12 plays an important role in translational accuracy. In terms of biological role, located at the back of the 30S subunit body where it stabilizes the conformation of the head with respect to the body. In Dehalococcoides mccartyi (strain CBDB1), this protein is Small ribosomal subunit protein uS5.